The following is a 328-amino-acid chain: UPF0421 protein SAR1980 (328 aa).

Helical transmembrane passes span 19 to 39, 61 to 81, 108 to 128, and 132 to 152; these read IAIF…IYAI, LPAT…FGDQ, VAVL…IFNF, and TLTA…VFPP.

It belongs to the UPF0421 family.

The protein localises to the cell membrane. The chain is UPF0421 protein SAR1980 from Staphylococcus aureus (strain MRSA252).